The following is a 282-amino-acid chain: Secretory carrier-associated membrane protein 3 (282 aa).

The interval methionine 1 to histidine 36 is disordered. The Cytoplasmic segment spans residues methionine 1–glutamine 117. A coiled-coil region spans residues leucine 48 to lysine 92. 4 consecutive transmembrane segments (helical) span residues tyrosine 118 to threonine 138, valine 148 to leucine 168, phenylalanine 185 to alanine 205, and isoleucine 230 to isoleucine 250. The Cytoplasmic portion of the chain corresponds to glycine 251–phenylalanine 282.

Belongs to the SCAMP family.

Its subcellular location is the cell membrane. It is found in the cytoplasmic vesicle. The protein localises to the secretory vesicle membrane. Probably involved in membrane trafficking. This chain is Secretory carrier-associated membrane protein 3 (SCAMP3), found in Oryza sativa subsp. japonica (Rice).